Here is an 80-residue protein sequence, read N- to C-terminus: Small ribosomal subunit protein uS17 (80 aa).

It belongs to the universal ribosomal protein uS17 family. As to quaternary structure, part of the 30S ribosomal subunit.

Its function is as follows. One of the primary rRNA binding proteins, it binds specifically to the 5'-end of 16S ribosomal RNA. This chain is Small ribosomal subunit protein uS17, found in Microcystis aeruginosa (strain NIES-843 / IAM M-2473).